We begin with the raw amino-acid sequence, 209 residues long: Orotate phosphoribosyltransferase (209 aa).

5-phospho-alpha-D-ribose 1-diphosphate contacts are provided by residues Arg96, Lys100, His102, and 122–130 (EDLISTGGS). Position 126 (Ser126) interacts with orotate.

It belongs to the purine/pyrimidine phosphoribosyltransferase family. PyrE subfamily. As to quaternary structure, homodimer. Requires Mg(2+) as cofactor.

The enzyme catalyses orotidine 5'-phosphate + diphosphate = orotate + 5-phospho-alpha-D-ribose 1-diphosphate. It participates in pyrimidine metabolism; UMP biosynthesis via de novo pathway; UMP from orotate: step 1/2. Catalyzes the transfer of a ribosyl phosphate group from 5-phosphoribose 1-diphosphate to orotate, leading to the formation of orotidine monophosphate (OMP). In Streptococcus mutans serotype c (strain ATCC 700610 / UA159), this protein is Orotate phosphoribosyltransferase.